The chain runs to 623 residues: 1-butanol dehydrogenase (quinone) (623 aa).

The signal sequence occupies residues 1-28 (MKKSHAKPFALRAIVVATAAALSLPAAA). Residues Asp40, Thr43, and Asp46 each contribute to the Ca(2+) site. Residue Glu90 participates in pyrroloquinoline quinone binding. Residues Cys134 and Cys135 are joined by a disulfide bond. Pyrroloquinoline quinone contacts are provided by residues Arg140, Thr184, and 202-204 (HGS). Glu208 is a Ca(2+) binding site. The segment at 235 to 274 (HMGRLNGKDSTPTGDPKAPSWPDDPNSPTGKVEAWSQGGG) is disordered. Ca(2+) contacts are provided by Asn295 and Asp345. The active-site Proton acceptor is Asp345. Arg374 provides a ligand contact to pyrroloquinoline quinone. Positions 420–440 (GKPIEKDNRPPQPKEGADKGE) are disordered. Residue Ala592 participates in pyrroloquinoline quinone binding.

Belongs to the bacterial PQQ dehydrogenase family. The cofactor is pyrroloquinoline quinone. Ca(2+) serves as cofactor.

Its subcellular location is the periplasm. It catalyses the reaction butan-1-ol + a quinone = butanal + a quinol. Its function is as follows. Involved in the metabolism of butane. May function primarily in energy generation. Catalyzes the oxidation of 1-butanol to 1-butanal. Also able to use 2-butanol and butyraldehyde, although the affinity is comparatively low. The polypeptide is 1-butanol dehydrogenase (quinone) (Thauera butanivorans (strain ATCC 43655 / DSM 2080 / JCM 20651 / CCUG 51053 / NBRC 103042 / IAM 12574 / Bu B1211) (Pseudomonas butanovora)).